Reading from the N-terminus, the 207-residue chain is Large ribosomal subunit protein bL25 (207 aa).

This sequence belongs to the bacterial ribosomal protein bL25 family. CTC subfamily. As to quaternary structure, part of the 50S ribosomal subunit; part of the 5S rRNA/L5/L18/L25 subcomplex. Contacts the 5S rRNA. Binds to the 5S rRNA independently of L5 and L18.

Functionally, this is one of the proteins that binds to the 5S RNA in the ribosome where it forms part of the central protuberance. The sequence is that of Large ribosomal subunit protein bL25 from Brucella abortus (strain S19).